A 301-amino-acid polypeptide reads, in one-letter code: Asialoglycoprotein receptor 2 (301 aa).

Positions 1–43 (MEKDCQDIQQLDSEENDHQLSGDDEHGSHVQDPRIENPHWKGQ) are disordered. Topologically, residues 1–58 (MEKDCQDIQQLDSEENDHQLSGDDEHGSHVQDPRIENPHWKGQPLSRPFPQRLCSTFR) are cytoplasmic. At Ser-13 the chain carries Phosphoserine. Basic and acidic residues predominate over residues 16–39 (NDHQLSGDDEHGSHVQDPRIENPH). Cys-54 carries S-palmitoyl cysteine lipidation. A helical; Signal-anchor for type II membrane protein membrane pass occupies residues 59–79 (LSLLALAFNILLLVVICVVSS). Residues 80–301 (QSIQLQEEFR…VCEKRRNITH (222 aa)) are Extracellular-facing. N-linked (GlcNAc...) asparagine glycosylation is found at Asn-97 and Asn-165. One can recognise a C-type lectin domain in the interval 169–295 (CCPVNWVEFG…QQVNRWVCEK (127 aa)). Intrachain disulfides connect Cys-170–Cys-181, Cys-198–Cys-293, and Cys-271–Cys-285. Asn-298 carries an N-linked (GlcNAc...) asparagine glycan.

In terms of assembly, interacts with LASS2. In terms of tissue distribution, expressed exclusively in hepatic parenchymal cells.

The protein resides in the membrane. Mediates the endocytosis of plasma glycoproteins to which the terminal sialic acid residue on their complex carbohydrate moieties has been removed. The receptor recognizes terminal galactose and N-acetylgalactosamine units. After ligand binding to the receptor, the resulting complex is internalized and transported to a sorting organelle, where receptor and ligand are disassociated. The receptor then returns to the cell membrane surface. This Mus musculus (Mouse) protein is Asialoglycoprotein receptor 2 (Asgr2).